Here is a 704-residue protein sequence, read N- to C-terminus: ATP-dependent zinc metalloprotease FtsH (704 aa).

The Cytoplasmic portion of the chain corresponds to 1 to 17 (MADSAKTPRGKKRRPFT). Residues 18-38 (GLALWIIVALLLGMAMFSLFG) form a helical membrane-spanning segment. The Extracellular segment spans residues 39–127 (RDGYQQIDTQ…DEIASSSWWS (89 aa)). The chain crosses the membrane as a helical span at residues 128–148 (TLLLSFLPLLIFIGLFWFLIM). At 149–704 (NAQGGGKAMQ…GSAGTDGTGR (556 aa)) the chain is on the cytoplasmic side. 217–224 (GPPGTGKT) is a binding site for ATP. Residue H439 participates in Zn(2+) binding. E440 is a catalytic residue. Residues H443 and D515 each coordinate Zn(2+). The segment at 624–704 (PREVWISSTE…GSAGTDGTGR (81 aa)) is disordered. Residues 681–704 (PHGGEPGGGGYGYDGSAGTDGTGR) show a composition bias toward gly residues.

In the central section; belongs to the AAA ATPase family. The protein in the C-terminal section; belongs to the peptidase M41 family. In terms of assembly, homohexamer. Zn(2+) serves as cofactor.

The protein localises to the cell membrane. In terms of biological role, acts as a processive, ATP-dependent zinc metallopeptidase for both cytoplasmic and membrane proteins. Plays a role in the quality control of integral membrane proteins. The chain is ATP-dependent zinc metalloprotease FtsH from Brachybacterium faecium (strain ATCC 43885 / DSM 4810 / JCM 11609 / LMG 19847 / NBRC 14762 / NCIMB 9860 / 6-10).